The chain runs to 295 residues: Large ribosomal subunit protein uL18 (295 aa).

Residues 251–261 (PTPKKKTDFAG) show a composition bias toward basic and acidic residues. Residues 251–295 (PTPKKKTDFAGKTKRWNRKKMTFSQRRDRVKQKKASFLRAKQQEG) are disordered. Residues 262–271 (KTKRWNRKKM) are compositionally biased toward basic residues.

This sequence belongs to the universal ribosomal protein uL18 family. Component of the large ribosomal subunit (LSU).

It localises to the cytoplasm. Its subcellular location is the nucleus. Functionally, component of the ribosome, a large ribonucleoprotein complex responsible for the synthesis of proteins in the cell. The small ribosomal subunit (SSU) binds messenger RNAs (mRNAs) and translates the encoded message by selecting cognate aminoacyl-transfer RNA (tRNA) molecules. The large subunit (LSU) contains the ribosomal catalytic site termed the peptidyl transferase center (PTC), which catalyzes the formation of peptide bonds, thereby polymerizing the amino acids delivered by tRNAs into a polypeptide chain. The nascent polypeptides leave the ribosome through a tunnel in the LSU and interact with protein factors that function in enzymatic processing, targeting, and the membrane insertion of nascent chains at the exit of the ribosomal tunnel. The protein is Large ribosomal subunit protein uL18 (RPL5) of Styela clava (Sea squirt).